The chain runs to 451 residues: Tubulin alpha-1A chain (451 aa).

Residues Met1 to Cys4 carry the MREC motif motif. Residues Gln11, Glu71, Ser140, Gly144, Thr145, Thr179, Asn206, and Asn228 each contribute to the GTP site. Glu71 lines the Mg(2+) pocket. Glu254 is a catalytic residue. Positions Tyr432 to Tyr451 are disordered. Glu445 bears the 5-glutamyl polyglutamate mark.

Belongs to the tubulin family. As to quaternary structure, dimer of alpha and beta chains. A typical microtubule is a hollow water-filled tube with an outer diameter of 25 nm and an inner diameter of 15 nM. Alpha-beta heterodimers associate head-to-tail to form protofilaments running lengthwise along the microtubule wall with the beta-tubulin subunit facing the microtubule plus end conferring a structural polarity. Microtubules usually have 13 protofilaments but different protofilament numbers can be found in some organisms and specialized cells. Mg(2+) serves as cofactor. In terms of processing, some glutamate residues at the C-terminus are polyglycylated, resulting in polyglycine chains on the gamma-carboxyl group. Glycylation is mainly limited to tubulin incorporated into axonemes (cilia and flagella) whereas glutamylation is prevalent in neuronal cells, centrioles, axonemes, and the mitotic spindle. Both modifications can coexist on the same protein on adjacent residues, and lowering polyglycylation levels increases polyglutamylation, and reciprocally. The precise function of polyglycylation is still unclear. Some glutamate residues at the C-terminus are polyglutamylated, resulting in polyglutamate chains on the gamma-carboxyl group. Polyglutamylation plays a key role in microtubule severing by spastin (SPAST). SPAST preferentially recognizes and acts on microtubules decorated with short polyglutamate tails: severing activity by SPAST increases as the number of glutamates per tubulin rises from one to eight, but decreases beyond this glutamylation threshold. Post-translationally, undergoes a tyrosination/detyrosination cycle, the cyclic removal and re-addition of a C-terminal tyrosine residue by the enzymes tubulin tyrosine carboxypeptidase (MATCAP1, VASH1 or VASH2) and tubulin tyrosine ligase (TTL), respectively. In terms of processing, tyrosination promotes microtubule interaction with CAP-Gly microtubule plus-end tracking proteins. Tyrosinated tubulins regulate the initiation of dynein-driven motility. Detyrosination is involved in metaphase plate congression by guiding chromosomes during mitosis. Detyrosination increases microtubules-dependent mechanotransduction in dystrophic cardiac and skeletal muscle. In cardiomyocytes, detyrosinated microtubules are required to resist to contractile compression during contraction.

It is found in the cytoplasm. Its subcellular location is the cytoskeleton. It catalyses the reaction GTP + H2O = GDP + phosphate + H(+). Functionally, tubulin is the major constituent of microtubules, a cylinder consisting of laterally associated linear protofilaments composed of alpha- and beta-tubulin heterodimers. Microtubules grow by the addition of GTP-tubulin dimers to the microtubule end, where a stabilizing cap forms. Below the cap, tubulin dimers are in GDP-bound state, owing to GTPase activity of alpha-tubulin. The polypeptide is Tubulin alpha-1A chain (TUBA1A) (Gallus gallus (Chicken)).